We begin with the raw amino-acid sequence, 296 residues long: Hca operon transcriptional activator HcaR (296 aa).

The HTH lysR-type domain occupies 1-58; that stretch reads MELRHLRYFVAVAQALNFTRAAEKLHTSQPSLSSQIRDLENCVGVPLLVRDKRKVALT. Positions 18–38 form a DNA-binding region, H-T-H motif; it reads FTRAAEKLHTSQPSLSSQIRD.

The protein belongs to the LysR transcriptional regulatory family.

Its function is as follows. Transcriptional activator of the hca operon for 3-phenylpropionic acid catabolism. This is Hca operon transcriptional activator HcaR (hcaR) from Escherichia coli (strain K12).